The chain runs to 214 residues: Methyltransferase HEMK2 (214 aa).

S-adenosyl-L-methionine contacts are provided by Thr-29, Glu-51, Gly-53, Asp-77, Asp-103, Leu-104, and Asn-122. Asn-122 contributes to the a protein binding site.

It belongs to the eukaryotic/archaeal PrmC-related family. In terms of assembly, heterodimer; heterodimerization with TRMT112 is required for S-adenosyl-L-methionine-binding. Post-translationally, ubiquitinated, leading to its degradation by the proteasome. In terms of tissue distribution, highly expressed in undifferentiated embryonic stem cells (at protein level). Also expressed in testis and brain, weakly expressed in differentiated embryonic stem cells and kidney. Not expressed in muscle, heart, placenta, pancreas, lung and stomach.

Its subcellular location is the nucleus. The enzyme catalyses L-lysyl-[histone] + S-adenosyl-L-methionine = N(6)-methyl-L-lysyl-[histone] + S-adenosyl-L-homocysteine + H(+). The catalysed reaction is L-glutaminyl-[protein] + S-adenosyl-L-methionine = N(5)-methyl-L-glutaminyl-[protein] + S-adenosyl-L-homocysteine + H(+). It carries out the reaction methylarsonous acid + S-adenosyl-L-methionine = dimethylarsinate + S-adenosyl-L-homocysteine + 2 H(+). In terms of biological role, methyltransferase that can methylate proteins and, to a lower extent, arsenic. Catalytic subunit of a heterodimer with TRMT112, which monomethylates 'Lys-12' of histone H4 (H4K12me1), a modification present at the promoters of numerous genes encoding cell cycle regulators. Catalytic subunit of a heterodimer with TRMT112, which catalyzes N5-methylation of Glu residue of proteins with a Gly-Gln-Xaa-Xaa-Xaa-Arg motif. Methylates ETF1 on 'Gln-185'; ETF1 needs to be complexed to ERF3 in its GTP-bound form to be efficiently methylated. May also play a role in the modulation of arsenic-induced toxicity by mediating the conversion of monomethylarsonous acid (3+) into the less toxic dimethylarsonic acid. It however only plays a limited role in arsenic metabolism compared with AS3MT. This Mus musculus (Mouse) protein is Methyltransferase HEMK2.